A 313-amino-acid chain; its full sequence is Ketimine reductase mu-crystallin (313 aa).

Arg47 is a 3,3',5-triiodo-L-thyronine binding site. NADPH contacts are provided by Ser90, His91, Arg118, Ala143, Val145, Gln146, Asn167, Arg168, Thr169, Asn172, Thr204, Met205, and Val225. Glu256 contributes to the 3,3',5-triiodo-L-thyronine binding site. NADPH is bound at residue Ser291.

The protein belongs to the ornithine cyclodeaminase/mu-crystallin family. As to quaternary structure, homodimer. Binds the thyroid hormone triiodothyronine (T3); T3 binding inhibits enzymatic activity.

It is found in the cytoplasm. It carries out the reaction L-pipecolate + NADP(+) = Delta(1)-piperideine-2-carboxylate + NADPH + H(+). The enzyme catalyses L-pipecolate + NAD(+) = Delta(1)-piperideine-2-carboxylate + NADH + H(+). The catalysed reaction is L-proline + NADP(+) = 1-pyrroline-2-carboxylate + NADPH + H(+). It catalyses the reaction L-proline + NAD(+) = 1-pyrroline-2-carboxylate + NADH + H(+). It carries out the reaction (3R)-1,4-thiomorpholine-3-carboxylate + NAD(+) = 3,4-dehydrothiomorpholine-3-carboxylate + NADH + 2 H(+). The enzyme catalyses (3R)-1,4-thiomorpholine-3-carboxylate + NADP(+) = 3,4-dehydrothiomorpholine-3-carboxylate + NADPH + 2 H(+). The catalysed reaction is (S)-cystathionine ketimine + NADH + 2 H(+) = (3R,5S)-2,3,5,6,7-pentahydro-1,4-thiazepine-3,5-dicarboxylate + NAD(+). It catalyses the reaction (S)-cystathionine ketimine + NADPH + 2 H(+) = (3R,5S)-2,3,5,6,7-pentahydro-1,4-thiazepine-3,5-dicarboxylate + NADP(+). It carries out the reaction (R)-lanthionine ketimine + NADPH + 2 H(+) = (3R,5R)-1,4-thiomorpholine-3,5-dicarboxylate + NADP(+). The enzyme catalyses Delta(2)-thiazoline-2-carboxylate + NADPH + 2 H(+) = L-thiazolidine-2-carboxylate + NADP(+). Functionally, catalyzes the NAD(P)H-dependent reduction of imine double bonds of a number of cyclic ketimine substrates, including sulfur-containing cyclic ketimines. Under physiological conditions, it efficiently catalyzes delta(1)-piperideine-2-carboxylate (P2C) and delta(1)-pyrroline-2-carboxylate (Pyr2C) reduction, suggesting a central role in lysine and glutamate metabolism. Additional substrates are delta(2)-thiazoline-2-carboxylate (T2C), 3,4-dehydrothiomorpholine-3-carboxylate (AECK), and (R)-lanthionine ketimine (LK) that is reduced at very low rate compared to other substrates. Also catalyzes the NAD(P)H-dependent reduction of (S)-cystathionine ketimine (CysK). This chain is Ketimine reductase mu-crystallin, found in Rattus norvegicus (Rat).